Consider the following 351-residue polypeptide: MATPNCLILWVLLIADTVWTQSVRQAYEIQDPEDWDVHDDFYCPRECFCPPSFPTALYCENRGLTEIPPIPSRIWYLYLENNLIESIPEKPFENATQLRWINLNKNKITNYGIEKGALSQLKKLLFLFLEDNELEEVPSPLPRSLEQLQLARNKVSRIPQGTFSNLENLTLLDLQHNKLLDNAFQRDTFKGLKNLMQLNMAKNALRNMPPRLPANTMQLFLDNNSIEGIPENYFNVIPKVAFLRLNHNKLSDAGLPSRGFDVSSILDLQLSYNQLTNFPRINANLQHLHLDHNKIKNVNMSVICPTTLRAEQDAFIHGPQLSYLRLDGNEIKPPIPIDLVACFKLLQAFII.

The N-terminal stretch at 1 to 20 is a signal peptide; it reads MATPNCLILWVLLIADTVWT. In terms of domain architecture, LRRNT spans 34–72; it reads DWDVHDDFYCPRECFCPPSFPTALYCENRGLTEIPPIPS. 2 cysteine pairs are disulfide-bonded: cysteine 43-cysteine 49 and cysteine 47-cysteine 59. LRR repeat units lie at residues 73–94, 97–118, 123–143, 144–165, 168–181, 194–214, 215–236, 239–259, 264–283, and 284–305; these read RIWY…PFEN, QLRW…KGAL, KLLF…PLPR, SLEQ…TFSN, NLTL…KLLD, NLMQ…RLPA, NTMQ…YFNV, KVAF…PSRG, SILD…RINA, and NLQH…VICP. Asparagine 94 carries an N-linked (GlcNAc...) (keratan sulfate) asparagine glycan. Asparagine 168 is a glycosylation site (N-linked (GlcNAc...) (keratan sulfate) asparagine). Asparagine 223 carries an N-linked (GlcNAc...) asparagine glycan. Asparagine 299 is a glycosylation site (N-linked (GlcNAc...) asparagine). Cysteine 304 and cysteine 342 are disulfide-bonded.

This sequence belongs to the small leucine-rich proteoglycan (SLRP) family. SLRP class II subfamily. Post-translationally, binds keratan sulfate chains. In terms of tissue distribution, selectively expressed in cornea of adult where it is detected in keratocytes but not in scleral cells. In embryo, first detected in periocular mesenchymal cells migrating toward developing cornea on 13.5 dpc; expression gradually restricted to corneal stromal cells on 14.5 to 18.5 dpc. Detected in scleral cells of 15.5 dpc but not in 18.5 dpc embryos.

The protein resides in the secreted. Its subcellular location is the extracellular space. It is found in the extracellular matrix. Its function is as follows. May be important in developing and maintaining corneal transparency and for the structure of the stromal matrix. The protein is Keratocan (Kera) of Mus musculus (Mouse).